Consider the following 449-residue polypeptide: Glucose-6-phosphate isomerase (449 aa).

Residue Glu291 is the Proton donor of the active site. Active-site residues include His312 and Lys426.

It belongs to the GPI family.

The protein localises to the cytoplasm. It catalyses the reaction alpha-D-glucose 6-phosphate = beta-D-fructose 6-phosphate. It functions in the pathway carbohydrate biosynthesis; gluconeogenesis. It participates in carbohydrate degradation; glycolysis; D-glyceraldehyde 3-phosphate and glycerone phosphate from D-glucose: step 2/4. Functionally, catalyzes the reversible isomerization of glucose-6-phosphate to fructose-6-phosphate. The protein is Glucose-6-phosphate isomerase of Streptococcus pyogenes serotype M3 (strain ATCC BAA-595 / MGAS315).